The following is a 344-amino-acid chain: Zinc transporter 9 (344 aa).

Residues 1–21 (MASILISGAAGVSIPLVGTLL) traverse the membrane as a helical segment. At 22–30 (PLNGGLMRG) the chain is on the cytoplasmic side. The helical transmembrane segment at 31–51 (AKAFAAGVILATGFVHMLSGG) threads the bilayer. The Extracellular segment spans residues 52 to 72 (SKALSDPCLPEFPWKMFPFPE). A helical membrane pass occupies residues 73 to 93 (FFAMVAALLTLLADFMITGYY). At 94–188 (ERKQEKMMNQ…DVGLDSGVRH (95 aa)) the chain is on the cytoplasmic side. Residues 189–209 (VVVSQILEMGIVSHSIIIGIS) form a helical membrane-spanning segment. At 210–221 (LGVSHSPCTIRP) the chain is on the extracellular side. The helical transmembrane segment at 222 to 242 (LLLALSFHQFFEGFALGGCVA) threads the bilayer. Topologically, residues 243–251 (EARLTPRGS) are cytoplasmic. A helical membrane pass occupies residues 252–272 (AMMAFFFAITTPIGVAVGTAI). Topologically, residues 273–291 (ASSYNSYSVAALVAEGVLD) are extracellular. A helical membrane pass occupies residues 292–312 (SLSAGILVYMALVDLIAADFL). Over 313–323 (SKKMSVDFRVQ) the chain is Cytoplasmic. Residues 324–344 (VVSYCFLFLGAGMMSALAIWA) form a helical membrane-spanning segment.

This sequence belongs to the ZIP transporter (TC 2.A.5) family.

It is found in the cell membrane. Its function is as follows. Zinc transporter involved in zinc uptake in roots. Targeted by BZIP19 transcription factor in response to zinc-deficient conditions. This is Zinc transporter 9 (ZIP9) from Arabidopsis thaliana (Mouse-ear cress).